Here is a 595-residue protein sequence, read N- to C-terminus: Elongation factor 4 (595 aa).

A tr-type G domain is found at 2–184 (SHIRNFSIIA…RLVATIPPPT (183 aa)). GTP contacts are provided by residues 14-19 (DHGKST) and 131-134 (NKMD).

The protein belongs to the TRAFAC class translation factor GTPase superfamily. Classic translation factor GTPase family. LepA subfamily.

The protein resides in the cell inner membrane. The enzyme catalyses GTP + H2O = GDP + phosphate + H(+). In terms of biological role, required for accurate and efficient protein synthesis under certain stress conditions. May act as a fidelity factor of the translation reaction, by catalyzing a one-codon backward translocation of tRNAs on improperly translocated ribosomes. Back-translocation proceeds from a post-translocation (POST) complex to a pre-translocation (PRE) complex, thus giving elongation factor G a second chance to translocate the tRNAs correctly. Binds to ribosomes in a GTP-dependent manner. The sequence is that of Elongation factor 4 from Pseudomonas syringae pv. tomato (strain ATCC BAA-871 / DC3000).